The sequence spans 487 residues: MKTIAILGKPNVGKSSLFNRLIKQHLAITSDVSGTTRDVKRACFDISGVEVELLDTGGIDKAEGLFAKVSANSLKAGQEADLVLYMVDGNVVPQDDDIAYFRTIQKAKKPLVLVINKVDNDKIKQQAWDFACFGAEQMYFISVHHNRGLSILLEAIFELLSLAKEQSLSNNLRSQMDNEEIDESLEEFLGILESTPNKSEENIAVGIIGRVNVGKSSLLNALLGKERSVVSEVAGTTIDPVDDEMDIEGKRVRFVDTAGIRRASKIWGIEKFALLRTNAALAQSHIVILVLDASESFVELDEKISSLIPKHALGVIVVLNKWDKKHKEYKEIIKEFKHRFPFLSFAPVMTLSALNGRNIDKLKKEILKVYQRFAYRIPTSALNDVIAQAVAHHHIPSDHGKIVKIYYATQYATHPPQIALVSNRPESLHFSYKRYIINMLREQFDFEGVPILLSVKGKNAKDEENTSAKKESPSKVSHRESKNRRFV.

2 EngA-type G domains span residues 2 to 164 (KTIA…SLAK) and 203 to 374 (IAVG…QRFA). GTP is bound by residues 8 to 15 (GKPNVGKS), 55 to 59 (DTGGI), 116 to 119 (NKVD), 209 to 216 (GRVNVGKS), 256 to 260 (DTAGI), and 320 to 323 (NKWD). Residues 375-459 (YRIPTSALND…PILLSVKGKN (85 aa)) form the KH-like domain. Over residues 459–480 (NAKDEENTSAKKESPSKVSHRE) the composition is skewed to basic and acidic residues. Positions 459–487 (NAKDEENTSAKKESPSKVSHRESKNRRFV) are disordered.

It belongs to the TRAFAC class TrmE-Era-EngA-EngB-Septin-like GTPase superfamily. EngA (Der) GTPase family. In terms of assembly, associates with the 50S ribosomal subunit.

In terms of biological role, GTPase that plays an essential role in the late steps of ribosome biogenesis. This is GTPase Der from Helicobacter hepaticus (strain ATCC 51449 / 3B1).